Here is a 32-residue protein sequence, read N- to C-terminus: MSDIN-like toxin proprotein 2 (32 aa).

Positions 1–10 are excised as a propeptide; sequence MSDINATRVP. The cyclopeptide (Ala-Pro) cross-link spans 11 to 17; it reads AWLAECP. Residues 18–32 constitute a propeptide that is removed on maturation; that stretch reads CVGDDISHLLTRGEK.

The protein belongs to the MSDIN fungal toxin family. In terms of processing, processed by the macrocyclase-peptidase enzyme POPB to yield a toxic cyclic heptapeptide. POPB first removes 10 residues from the N-terminus. Conformational trapping of the remaining peptide forces the enzyme to release this intermediate rather than proceed to macrocyclization. The enzyme rebinds the remaining peptide in a different conformation and catalyzes macrocyclization of the N-terminal 7 residues.

Probable toxin that belongs to the MSDIN-like toxin family responsible for a large number of food poisoning cases and deaths. This Amanita rimosa protein is MSDIN-like toxin proprotein 2.